Here is a 101-residue protein sequence, read N- to C-terminus: Small ribosomal subunit protein bS18c (101 aa).

The protein belongs to the bacterial ribosomal protein bS18 family. Part of the 30S ribosomal subunit.

It is found in the plastid. Its subcellular location is the chloroplast. The protein is Small ribosomal subunit protein bS18c of Aethionema grandiflorum (Persian stone-cress).